The following is a 282-amino-acid chain: Undecaprenyl-diphosphatase (282 aa).

7 consecutive transmembrane segments (helical) span residues 40 to 60 (GAAFTAIVQIGTLAAVLIYFM), 89 to 109 (WMIAAGTIPIVVFGLAFKDDI), 113 to 133 (LRSLYWVSAALIALALVLSIA), 150 to 170 (ISEITWLDAMIIGFAQAMALI), 196 to 216 (FSFLLSLPSVFAAGIYQLYKT), 230 to 250 (IAVATVFAFIFGYLSIAFLLT), and 258 to 278 (GIFIGYRLLLGISLIIMIGTG).

Belongs to the UppP family.

It localises to the cell inner membrane. It catalyses the reaction di-trans,octa-cis-undecaprenyl diphosphate + H2O = di-trans,octa-cis-undecaprenyl phosphate + phosphate + H(+). Functionally, catalyzes the dephosphorylation of undecaprenyl diphosphate (UPP). Confers resistance to bacitracin. The polypeptide is Undecaprenyl-diphosphatase (Chlorobaculum parvum (strain DSM 263 / NCIMB 8327) (Chlorobium vibrioforme subsp. thiosulfatophilum)).